The chain runs to 217 residues: Probable glutathione S-transferase DHAR4 (217 aa).

2 residues coordinate glutathione: Lys-8 and Asp-19. Lys-8 and Asp-19 together coordinate L-ascorbate. The region spanning 10 to 85 (ASGAPDVLGD…DLIVGIIEEK (76 aa)) is the GST N-terminal domain. The active-site Nucleophile is Cys-20. A Glutathione-binding motif is present at residues 20–25 (CPFGQR). Glutathione is bound by residues Lys-47, Ser-75, His-164, and Trp-211. In terms of domain architecture, GST C-terminal spans 86–217 (YPEPSLVTFP…IASWAPKLDV (132 aa)). Lys-214 is an L-ascorbate binding site.

The protein belongs to the GST superfamily. DHAR family. As to quaternary structure, monomer.

The protein localises to the cytoplasm. It localises to the cytosol. The catalysed reaction is RX + glutathione = an S-substituted glutathione + a halide anion + H(+). It carries out the reaction L-dehydroascorbate + 2 glutathione = glutathione disulfide + L-ascorbate. Exhibits glutathione-dependent thiol transferase and dehydroascorbate (DHA) reductase activities. The sequence is that of Probable glutathione S-transferase DHAR4 (DHAR4) from Arabidopsis thaliana (Mouse-ear cress).